The chain runs to 196 residues: Ankyrin repeat domain-containing protein 66 (196 aa).

ANK repeat units lie at residues Ser7–Tyr37, Asn43–Leu72, and Val76–Ala105. A disordered region spans residues Glu152 to Val196. The segment covering Arg187–Val196 has biased composition (polar residues).

In Homo sapiens (Human), this protein is Ankyrin repeat domain-containing protein 66 (ANKRD66).